The sequence spans 128 residues: DNA-directed RNA polymerase subunit omega (128 aa).

Residues 87 to 106 (ARSSQAAPKSAPGQEIGKSF) are disordered.

Belongs to the RNA polymerase subunit omega family. In terms of assembly, the RNAP catalytic core consists of 2 alpha, 1 beta, 1 beta' and 1 omega subunit. When a sigma factor is associated with the core the holoenzyme is formed, which can initiate transcription.

It catalyses the reaction RNA(n) + a ribonucleoside 5'-triphosphate = RNA(n+1) + diphosphate. Promotes RNA polymerase assembly. Latches the N- and C-terminal regions of the beta' subunit thereby facilitating its interaction with the beta and alpha subunits. The protein is DNA-directed RNA polymerase subunit omega of Anaplasma marginale (strain St. Maries).